The chain runs to 396 residues: Anaerobic glycerol-3-phosphate dehydrogenase subunit C (396 aa).

2 consecutive 4Fe-4S ferredoxin-type domains span residues 2–29 (NDTSFENCIKCTVCTTACPVSRVNPGYP) and 45–76 (DGALYDEALKYCINCKRCEVACPSDVKIGDII). The [4Fe-4S] cluster site is built by C9, C12, C15, C19, C56, C59, C62, and C66.

In terms of assembly, composed of a catalytic GlpA/B dimer and of GlpC.

It localises to the cell inner membrane. Its pathway is polyol metabolism; glycerol degradation via glycerol kinase pathway; glycerone phosphate from sn-glycerol 3-phosphate (anaerobic route): step 1/1. Electron transfer protein; may also function as the membrane anchor for the GlpAB dimer. This is Anaerobic glycerol-3-phosphate dehydrogenase subunit C (glpC) from Escherichia coli O157:H7.